The sequence spans 260 residues: Indole-3-glycerol phosphate synthase (260 aa).

The protein belongs to the TrpC family.

The enzyme catalyses 1-(2-carboxyphenylamino)-1-deoxy-D-ribulose 5-phosphate + H(+) = (1S,2R)-1-C-(indol-3-yl)glycerol 3-phosphate + CO2 + H2O. It participates in amino-acid biosynthesis; L-tryptophan biosynthesis; L-tryptophan from chorismate: step 4/5. The polypeptide is Indole-3-glycerol phosphate synthase (Neisseria gonorrhoeae (strain NCCP11945)).